The chain runs to 200 residues: Holliday junction resolvase RecU (200 aa).

Positions 1–25 are disordered; the sequence is MTIRYPNGKRYNQASQPQKTPIKTH. Over residues 10-25 the composition is skewed to polar residues; sequence RYNQASQPQKTPIKTH. Mg(2+)-binding residues include Thr85, Asp87, Glu100, and Gln119.

This sequence belongs to the RecU family. The cofactor is Mg(2+).

Its subcellular location is the cytoplasm. It catalyses the reaction Endonucleolytic cleavage at a junction such as a reciprocal single-stranded crossover between two homologous DNA duplexes (Holliday junction).. Endonuclease that resolves Holliday junction intermediates in genetic recombination. Cleaves mobile four-strand junctions by introducing symmetrical nicks in paired strands. Promotes annealing of linear ssDNA with homologous dsDNA. Required for DNA repair, homologous recombination and chromosome segregation. In Bacillus cereus (strain G9842), this protein is Holliday junction resolvase RecU.